Consider the following 134-residue polypeptide: Arsenate reductase (134 aa).

Catalysis depends on nucleophile residues Cys-11, Cys-83, and Cys-90. 2 disulfides stabilise this stretch: Cys-11–Cys-83 and Cys-83–Cys-90.

Belongs to the low molecular weight phosphotyrosine protein phosphatase family. Thioredoxin-coupled ArsC subfamily.

The protein resides in the cytoplasm. It carries out the reaction arsenate + [thioredoxin]-dithiol + H(+) = arsenite + [thioredoxin]-disulfide + H2O. Catalyzes the reduction of arsenate [As(V)] to arsenite [As(III)]. The chain is Arsenate reductase from Bacillus cereus (strain ATCC 14579 / DSM 31 / CCUG 7414 / JCM 2152 / NBRC 15305 / NCIMB 9373 / NCTC 2599 / NRRL B-3711).